A 420-amino-acid chain; its full sequence is Glucose-1-phosphate adenylyltransferase (420 aa).

Alpha-D-glucose 1-phosphate-binding positions include Tyr-107, Gly-172, 187-188 (EK), and Ser-205.

Belongs to the bacterial/plant glucose-1-phosphate adenylyltransferase family. As to quaternary structure, homotetramer.

The catalysed reaction is alpha-D-glucose 1-phosphate + ATP + H(+) = ADP-alpha-D-glucose + diphosphate. It participates in glycan biosynthesis; glycogen biosynthesis. Its function is as follows. Involved in the biosynthesis of ADP-glucose, a building block required for the elongation reactions to produce glycogen. Catalyzes the reaction between ATP and alpha-D-glucose 1-phosphate (G1P) to produce pyrophosphate and ADP-Glc. This is Glucose-1-phosphate adenylyltransferase from Rhizobium rhizogenes (strain K84 / ATCC BAA-868) (Agrobacterium radiobacter).